We begin with the raw amino-acid sequence, 1135 residues long: uncharacterized protein (1135 aa).

Residues 1-28 (MALFPRGILIALVLSFVLNLGLVTKIHA) form the signal peptide. The next 7 helical transmembrane spans lie at 332 to 352 (IVTA…LLAG), 359 to 379 (EYIN…GINI), 393 to 413 (MIQW…NWVM), 495 to 515 (MLVS…AFMV), 522 to 542 (MISI…FLFA), 555 to 575 (MISF…MFAV), and 700 to 720 (IKNI…MYNF).

Belongs to the TrbL/VirB6 family.

Its subcellular location is the cell membrane. This is an uncharacterized protein from Rickettsia typhi (strain ATCC VR-144 / Wilmington).